The primary structure comprises 81 residues: NAD(P)H-quinone oxidoreductase subunit O (81 aa).

Belongs to the complex I NdhO subunit family. NDH-1 can be composed of about 15 different subunits; different subcomplexes with different compositions have been identified which probably have different functions.

It localises to the cellular thylakoid membrane. It catalyses the reaction a plastoquinone + NADH + (n+1) H(+)(in) = a plastoquinol + NAD(+) + n H(+)(out). The enzyme catalyses a plastoquinone + NADPH + (n+1) H(+)(in) = a plastoquinol + NADP(+) + n H(+)(out). NDH-1 shuttles electrons from an unknown electron donor, via FMN and iron-sulfur (Fe-S) centers, to quinones in the respiratory and/or the photosynthetic chain. The immediate electron acceptor for the enzyme in this species is believed to be plastoquinone. Couples the redox reaction to proton translocation, and thus conserves the redox energy in a proton gradient. Cyanobacterial NDH-1 also plays a role in inorganic carbon-concentration. This is NAD(P)H-quinone oxidoreductase subunit O from Prochlorococcus marinus (strain MIT 9303).